We begin with the raw amino-acid sequence, 507 residues long: Protein MosB (507 aa).

Positions 256–275 form a DNA-binding region, H-T-H motif; it reads QAHGALYKGQHVGLLSDIGC. K282 carries the post-translational modification N6-(pyridoxal phosphate)lysine.

The protein belongs to the DegT/DnrJ/EryC1 family.

Functionally, involved in the biosynthesis of the rhizopine 3-O-methyl-scyllo-inosamine. May have a regulatory role in controlling the housekeeping genes within the nodule which are involved in the biosynthesis of the rhizopine backbone. In Rhizobium meliloti (Ensifer meliloti), this protein is Protein MosB (mosB).